A 289-amino-acid chain; its full sequence is MVVVTGREPDSRHSDGAMSSSEAEDDFLEPATPTATQAGHGLPLLPQEFPEVVPLNIGGAHFTTRLSTLRRYEDTMLAAMFSGRHYIPTDSEGRYFIDRDGTHFGDVLNFLRSGDLPPREHVRAVHKEAQYYAIGPLLEQLENMQPLKGEKVRQAFLGLMPYYKDHLERIVEIARLRAVQRKARFAKLKVCVFKEEMPITPYECPLLNSLRFERSESDGQLFEHHCEVDVSFGPWEAVADVYDLLHCLVTDLSAQGLTVDHQCIGVCDKHLVNHYYCKRPIYEFKITWW.

Residues 1-42 form a disordered region; it reads MVVVTGREPDSRHSDGAMSSSEAEDDFLEPATPTATQAGHGL. In terms of domain architecture, BTB spans 53-141; sequence VPLNIGGAHF…YAIGPLLEQL (89 aa).

In terms of assembly, interacts with CUL3. As to expression, high expression in brain, particularly in post-mitotic neurons. Expressed in the mitral cells of the olfactory bulbs, the hippocampus, the deep layers of the cerebral cortex and Purkinje cells of the cerebellum. Not detected in astrocytes or microglial cells. Also expressed in heart, liver, spleen and kidney.

It localises to the cell membrane. The protein resides in the cytoplasm. It is found in the cytosol. In terms of biological role, may be involved in the control of excitability of cortical neurons. This is BTB/POZ domain-containing protein KCTD7 (Kctd7) from Mus musculus (Mouse).